The following is a 1084-amino-acid chain: Cellulose synthase A catalytic subunit 2 [UDP-forming] (1084 aa).

The residue at position 1 (Met1) is an N-acetylmethionine. The Cytoplasmic portion of the chain corresponds to 1-278; sequence MNTGGRLIAG…RSSRINPYRM (278 aa). 8 residues coordinate Zn(2+): Cys39, Cys42, Cys58, Cys61, Cys66, Cys69, Cys81, and Cys84. The segment at 39–85 adopts an RING-type; degenerate zinc-finger fold; sequence CQICGDEIELTVSSELFVACNECAFPVCRPCYEYERREGNQACPQCK. Residues 230 to 259 form a disordered region; that stretch reads IKHEGGNNGRGSNDDDELDDPDMPMMDEGR. A helical membrane pass occupies residues 279–299; sequence LILCRLAILGLFFHYRILHPV. The Extracellular segment spans residues 300–301; it reads ND. A helical membrane pass occupies residues 302–322; it reads AYGLWLTSVICEIWFAVSWIL. Over 323-867 the chain is Cytoplasmic; that stretch reads DQFPKWYPIE…INSVVYPWTS (545 aa). UDP-alpha-D-glucose contacts are provided by Ser361, Lys367, Glu368, and Asp397. Asp397 is an active-site residue. The stretch at 451 to 477 forms a coiled coil; sequence VRERRAMKRDYEEFKVKINALVATAQK. Residue Lys538 participates in UDP-alpha-D-glucose binding. Mn(2+)-binding residues include Lys539 and Asp563. The active site involves Asp784. Residues 868–888 form a helical membrane-spanning segment; it reads LPLIVYCSLPAVCLLTGKFIV. Over 889–893 the chain is Extracellular; sequence PEISN. The helical transmembrane segment at 894 to 914 threads the bilayer; that stretch reads YAGILFMLMFISIAVTGILEM. Over 915–929 the chain is Cytoplasmic; it reads QWGGVGIDDWWRNEQ. The chain crosses the membrane as a helical span at residues 930–950; that stretch reads FWVIGGASSHLFALFQGLLKV. At 951-979 the chain is on the extracellular side; sequence LAGVNTNFTVTSKAADDGAFSELYIFKWT. Asn957 is a glycosylation site (N-linked (GlcNAc...) asparagine). A helical membrane pass occupies residues 980 to 1000; the sequence is TLLIPPTTLLIINIIGVIVGV. Topologically, residues 1001–1011 are cytoplasmic; the sequence is SDAISNGYDSW. A helical membrane pass occupies residues 1012–1032; that stretch reads GPLFGRLFFALWVIVHLYPFL. The Extracellular portion of the chain corresponds to 1033 to 1041; it reads KGMLGKQDK. Residues 1042–1062 form a helical membrane-spanning segment; it reads MPTIIVVWSILLASILTLLWV. Residues 1063-1084 lie on the Cytoplasmic side of the membrane; that stretch reads RVNPFVAKGGPVLEICGLNCGN.

The protein belongs to the glycosyltransferase 2 family. Plant cellulose synthase subfamily. As to quaternary structure, homodimer. Interaction through zinc finger domain. Mn(2+) serves as cofactor. Zn(2+) is required as a cofactor. As to expression, strongly and ubiquitously expressed. Localized in some dividing and expanding cells, as well as in vascular tissues.

The protein localises to the cell membrane. It catalyses the reaction [(1-&gt;4)-beta-D-glucosyl](n) + UDP-alpha-D-glucose = [(1-&gt;4)-beta-D-glucosyl](n+1) + UDP + H(+). The protein operates within glycan metabolism; plant cellulose biosynthesis. Catalytic subunit of cellulose synthase terminal complexes ('rosettes'), required for beta-1,4-glucan microfibril crystallization, a major mechanism of the cell wall formation. Involved in the primary cell wall formation. In Arabidopsis thaliana (Mouse-ear cress), this protein is Cellulose synthase A catalytic subunit 2 [UDP-forming].